Here is a 239-residue protein sequence, read N- to C-terminus: uncharacterized protein (239 aa).

Residues 1–65 (MRLDKLLANS…DYREFIYLMM (65 aa)) form the S4 RNA-binding domain. The active-site Nucleophile is the D103.

The protein belongs to the pseudouridine synthase RsuA family.

The enzyme catalyses a uridine in RNA = a pseudouridine in RNA. This is an uncharacterized protein from Bacillus subtilis (strain 168).